The following is a 678-amino-acid chain: MVLTTNLYSLNLRSTFFFTNTITCPTLFTFKLSSVSNPRRVFPNIRAHVSAASSNSELESLLSTDRKLISKQSNNGASSISSGVRLENISKSYEGITVLKDVTWEVKKGEKVGLIGVNGAGKTTQLRIITGQEEPDSGNVIWAKPNLKVAFLSQEFEVSMGKTVKEEFMCTFKEEMEIARKLENLQKAIEEAVDDLELMGKLLDEFDLLQRRAQEVDLDSIHAKISKLMSELGFVSEDADRLVASFSSGWQMRMSLGKILLQNPDLLLLDEPTNHLDLDTIEWLEGYLIKQDVPMVIISHDRAFLDQLCTKIVETEMGVSRTFDGNYSQYVISKAELVEAQYAAWEKQQKEIEATKDLISRLSAGANSGRASSAEKKLEKLQEEELIEKPFQRKQMKIRFPECGLSGRSVVTVKNLVFGFDDKMLFNKANLAIERGEKVAIIGPNGCGKSTLLKLIMGLEKPMRGEVILGEHNVLPNYFEQNQAEAQDLDKTVIETVVEAAVDWRIDDIKALLGRCNFKADMLDRKVSLLSGGEKARLAFCKFMVKPSTLLVLDEPTNHLDIPSKEMLEEAINEYKGTVITVSHDRYFIKQIVNRVIEVRDGGLMDYAGDYNYFLEKNVEARARELEREAELEEKAPKVKAKSKMSKAEREARKKQKMKAFQASKKKSKSSKNAKRWN.

ABC transporter domains lie at 84–342 (VRLE…EAQY) and 411–626 (VTVK…AREL). Residues 116-123 (GVNGAGKT) and 443-450 (GPNGCGKS) each bind ATP. The interval 630 to 678 (AELEEKAPKVKAKSKMSKAEREARKKQKMKAFQASKKKSKSSKNAKRWN) is disordered. A compositionally biased stretch (basic residues) spans 653–678 (RKKQKMKAFQASKKKSKSSKNAKRWN).

It belongs to the ABC transporter superfamily. ABCF family. EF3 (TC 3.A.1.121) subfamily.

The chain is ABC transporter F family member 2 (ABCF2) from Arabidopsis thaliana (Mouse-ear cress).